Consider the following 473-residue polypeptide: Mitochondrial distribution and morphology protein 10 (473 aa).

The protein belongs to the MDM10 family. As to quaternary structure, component of the ER-mitochondria encounter structure (ERMES) or MDM complex, composed of MMM1, MDM10, MDM12 and MDM34. Associates with the mitochondrial outer membrane sorting assembly machinery SAM(core) complex.

The protein resides in the mitochondrion outer membrane. Functionally, component of the ERMES/MDM complex, which serves as a molecular tether to connect the endoplasmic reticulum and mitochondria. Components of this complex are involved in the control of mitochondrial shape and protein biogenesis and may function in phospholipid exchange. MDM10 is involved in the late assembly steps of the general translocase of the mitochondrial outer membrane (TOM complex). Functions in the TOM40-specific route of the assembly of outer membrane beta-barrel proteins, including the association of TOM40 with the receptor TOM22 and small TOM proteins. Can associate with the SAM(core) complex as well as the MDM12-MMM1 complex, both involved in late steps of the major beta-barrel assembly pathway, that is responsible for biogenesis of all outer membrane beta-barrel proteins. May act as a switch that shuttles between both complexes and channels precursor proteins into the TOM40-specific pathway. Plays a role in mitochondrial morphology and in the inheritance of mitochondria. This Candida albicans (strain WO-1) (Yeast) protein is Mitochondrial distribution and morphology protein 10.